Consider the following 228-residue polypeptide: 2,3-bisphosphoglycerate-dependent phosphoglycerate mutase (228 aa).

Residues 8 to 15 (RHGQSEWN), 21 to 22 (TG), Arg-60, 87 to 90 (ERHY), Lys-98, 114 to 115 (RR), and 183 to 184 (GN) contribute to the substrate site. The active-site Tele-phosphohistidine intermediate is His-9. Residue Glu-87 is the Proton donor/acceptor of the active site.

It belongs to the phosphoglycerate mutase family. BPG-dependent PGAM subfamily.

The enzyme catalyses (2R)-2-phosphoglycerate = (2R)-3-phosphoglycerate. Its pathway is carbohydrate degradation; glycolysis; pyruvate from D-glyceraldehyde 3-phosphate: step 3/5. Catalyzes the interconversion of 2-phosphoglycerate and 3-phosphoglycerate. This is 2,3-bisphosphoglycerate-dependent phosphoglycerate mutase from Staphylococcus epidermidis (strain ATCC 12228 / FDA PCI 1200).